Consider the following 227-residue polypeptide: Urease accessory protein UreF (227 aa).

The protein belongs to the UreF family. In terms of assembly, ureD, UreF and UreG form a complex that acts as a GTP-hydrolysis-dependent molecular chaperone, activating the urease apoprotein by helping to assemble the nickel containing metallocenter of UreC. The UreE protein probably delivers the nickel.

The protein localises to the cytoplasm. Functionally, required for maturation of urease via the functional incorporation of the urease nickel metallocenter. The protein is Urease accessory protein UreF of Actinobacillus pleuropneumoniae (Haemophilus pleuropneumoniae).